The chain runs to 445 residues: DDB1- and CUL4-associated factor 13 (445 aa).

7 WD repeats span residues 64-104, 107-146, 152-191, 194-234, 236-276, 280-319, and 323-362; these read GHRD…CSRT, AHDG…YGEK, TILG…PMRS, WGVD…PLKK, ILEM…SPVK, DHVS…SREV, and KRMQ…KLGV. Positions 353–441 are required for nucleolar location; sequence KANASEKLGV…IPSEKKKHVL (89 aa). Composition is skewed to basic residues over residues 413–426 and 436–445; these read ARRK…KHSK and KKKHVLAVVE. The tract at residues 413-445 is disordered; sequence ARRKKDVNRRKHSKPGSVPIPSEKKKHVLAVVE.

It belongs to the WD repeat DCAF13/WDSOF1 family. As to quaternary structure, part of the small subunit (SSU) processome, composed of more than 70 proteins and the RNA chaperone small nucleolar RNA (snoRNA) U3. Component of the DCX(DCAF13) E3 ubiquitin ligase complex, at least composed of CUL4 (CUL4A or CUL4B), DDB1, DCAF13 and RBX1.

The protein localises to the nucleus. The protein resides in the nucleolus. Its pathway is protein modification; protein ubiquitination. In terms of biological role, part of the small subunit (SSU) processome, first precursor of the small eukaryotic ribosomal subunit. During the assembly of the SSU processome in the nucleolus, many ribosome biogenesis factors, an RNA chaperone and ribosomal proteins associate with the nascent pre-rRNA and work in concert to generate RNA folding, modifications, rearrangements and cleavage as well as targeted degradation of pre-ribosomal RNA by the RNA exosome. Substrate-recognition component of a DCX (DDB1-CUL4-X-box) E3 ubiquitin-protein ligase complex. The chain is DDB1- and CUL4-associated factor 13 (dcaf13) from Xenopus laevis (African clawed frog).